The sequence spans 337 residues: Glyceraldehyde-3-phosphate dehydrogenase (337 aa).

NAD(+) is bound by residues 12 to 13 (RI), D34, and R79. Residues 150 to 152 (SCT), T181, 210 to 211 (TG), and R233 each bind D-glyceraldehyde 3-phosphate. Catalysis depends on C151, which acts as the Nucleophile. N315 provides a ligand contact to NAD(+).

Belongs to the glyceraldehyde-3-phosphate dehydrogenase family. In terms of assembly, homotetramer.

Its subcellular location is the cytoplasm. The catalysed reaction is D-glyceraldehyde 3-phosphate + phosphate + NAD(+) = (2R)-3-phospho-glyceroyl phosphate + NADH + H(+). It participates in carbohydrate degradation; glycolysis; pyruvate from D-glyceraldehyde 3-phosphate: step 1/5. In Podospora anserina (Pleurage anserina), this protein is Glyceraldehyde-3-phosphate dehydrogenase (GPD).